Here is an 87-residue protein sequence, read N- to C-terminus: Large ribosomal subunit protein bL27 (87 aa).

The tract at residues 1–22 is disordered; that stretch reads MAHKKGQGSVKNGRDSRSKRLG.

This sequence belongs to the bacterial ribosomal protein bL27 family.

This chain is Large ribosomal subunit protein bL27, found in Akkermansia muciniphila (strain ATCC BAA-835 / DSM 22959 / JCM 33894 / BCRC 81048 / CCUG 64013 / CIP 107961 / Muc).